The primary structure comprises 267 residues: Tryptophan 2,3-dioxygenase (267 aa).

Residues 44–48 (FITIH) and Arg114 each bind substrate. His225 contributes to the heme binding site. Thr239 lines the substrate pocket.

Belongs to the tryptophan 2,3-dioxygenase family. As to quaternary structure, homotetramer. Requires heme as cofactor.

It catalyses the reaction L-tryptophan + O2 = N-formyl-L-kynurenine. The protein operates within amino-acid degradation; L-tryptophan degradation via kynurenine pathway; L-kynurenine from L-tryptophan: step 1/2. Heme-dependent dioxygenase that catalyzes the oxidative cleavage of the L-tryptophan (L-Trp) pyrrole ring and converts L-tryptophan to N-formyl-L-kynurenine. Catalyzes the oxidative cleavage of the indole moiety. The sequence is that of Tryptophan 2,3-dioxygenase from Nocardioides sp. (strain ATCC BAA-499 / JS614).